The chain runs to 315 residues: Serine/threonine-protein phosphatase PP2A catalytic subunit 3 (315 aa).

Mn(2+)-binding residues include D62, H64, D90, and N122. H123 acts as the Proton donor in catalysis. Mn(2+) is bound by residues H172 and H247. The tract at residues 294-315 (QFEPAPRENEPHTTRRVPDYFL) is disordered. Positions 298-315 (APRENEPHTTRRVPDYFL) are enriched in basic and acidic residues. The residue at position 315 (L315) is a Leucine methyl ester.

It belongs to the PPP phosphatase family. PP-2A subfamily. Requires Mn(2+) as cofactor. Reversibly methyl esterified on Leu-315 by leucine carboxyl methyltransferase 1 (PPM1) and protein phosphatase methylesterase 1 (PPE1). Carboxyl methylation influences the affinity of the catalytic subunit for the different regulatory subunits, thereby modulating the PP2A holoenzyme's substrate specificity, enzyme activity and cellular localization.

It carries out the reaction O-phospho-L-seryl-[protein] + H2O = L-seryl-[protein] + phosphate. The enzyme catalyses O-phospho-L-threonyl-[protein] + H2O = L-threonyl-[protein] + phosphate. This Paramecium tetraurelia protein is Serine/threonine-protein phosphatase PP2A catalytic subunit 3 (Ppn3).